Here is a 357-residue protein sequence, read N- to C-terminus: Low-salt glycan biosynthesis nucleotidyltransferase Agl11 (357 aa).

Mg(2+) contacts are provided by aspartate 108 and aspartate 221.

Belongs to the glucose-1-phosphate thymidylyltransferase family. Mg(2+) is required as a cofactor.

It participates in protein modification; protein glycosylation. The protein operates within cell surface structure biogenesis; S-layer biogenesis. Functionally, nucleotidyltransferase involved in N-glycan biosynthetic pathway that takes place under low-salt conditions (1.75 M instead of 3.4 M). Participates in the formation of the tetrasaccharide present at 'Asn-532' of S-layer glycoprotein Csg, consisting of a sulfated hexose, 2 hexoses and rhamnose. Involved in the addition of final rhamnose (sugar 4) of the tetrasaccharide on the dolichol phosphate carrier. This chain is Low-salt glycan biosynthesis nucleotidyltransferase Agl11 (agl11), found in Haloferax volcanii (strain ATCC 29605 / DSM 3757 / JCM 8879 / NBRC 14742 / NCIMB 2012 / VKM B-1768 / DS2) (Halobacterium volcanii).